A 464-amino-acid polypeptide reads, in one-letter code: UDP-glycosyltransferase 76C1 (464 aa).

UDP-alpha-D-glucose contacts are provided by residues S279, 338-340 (APQ), 355-363 (HNGWNSTLE), and 377-380 (KWDQ).

The protein belongs to the UDP-glycosyltransferase family.

Its activity is regulated as follows. Inhibited by olomoucine and 3-isobutyl-1-methylxanthine. Its function is as follows. Involved in the N-glucosylation of cytokinins. Catalyzes the formation of both the 7-N and the 9-N-glucosides. The sequence is that of UDP-glycosyltransferase 76C1 (UGT76C1) from Arabidopsis thaliana (Mouse-ear cress).